We begin with the raw amino-acid sequence, 106 residues long: HIG1 domain family member 2A, mitochondrial (106 aa).

Ala2 is subject to N-acetylalanine. One can recognise an HIG1 domain in the interval 20-106 (VIEGLSPTVY…LAVTAMKSRP (87 aa)). 2 consecutive transmembrane segments (helical) span residues 47-67 (PVVPIGCLATAAALTYGLYSF) and 83-103 (IAAQGFTVAAILLGLAVTAMK). Residues 104–106 (SRP) are Mitochondrial matrix-facing.

As to quaternary structure, associates with cytochrome c oxidase (COX, complex IV); proposed complex component.

It is found in the mitochondrion membrane. The protein localises to the mitochondrion inner membrane. Proposed subunit of cytochrome c oxidase (COX, complex IV), which is the terminal component of the mitochondrial respiratory chain that catalyzes the reduction of oxygen to water. May be involved in cytochrome c oxidase activity. May play a role in the assembly of respiratory supercomplexes. The protein is HIG1 domain family member 2A, mitochondrial (HIGD2A) of Homo sapiens (Human).